Reading from the N-terminus, the 82-residue chain is Small ribosomal subunit protein bS18 (82 aa).

The protein belongs to the bacterial ribosomal protein bS18 family. In terms of assembly, part of the 30S ribosomal subunit. Forms a tight heterodimer with protein bS6.

In terms of biological role, binds as a heterodimer with protein bS6 to the central domain of the 16S rRNA, where it helps stabilize the platform of the 30S subunit. The chain is Small ribosomal subunit protein bS18 from Rhizobium meliloti (strain 1021) (Ensifer meliloti).